The following is a 381-amino-acid chain: KRR1 small subunit processome component homolog (381 aa).

The interval 1-51 (MASPSLERPEKGAGKSEFRNQKPKPENQDESELLTVPDGWKEPAFSKEDNP) is disordered. Ala-2 carries the N-acetylalanine modification. Residues Ser-3 and Ser-5 each carry the phosphoserine modification. Basic and acidic residues-rich tracts occupy residues 7-27 (ERPE…KPEN) and 39-51 (GWKE…EDNP). Lys-24 is covalently cross-linked (Glycyl lysine isopeptide (Lys-Gly) (interchain with G-Cter in SUMO2)). The KH domain occupies 154–206 (KERFVKRRQRLIGPKGSTLKALELLTNCYIMVQGNTVSAIGPFSGLKEVRKVV). Residues 250-262 (NVNKRKEPKKKTV) show a composition bias toward basic residues. Disordered stretches follow at residues 250–278 (NVNK…ESQI) and 309–338 (AISK…ASTE). Residues Lys-340 and Lys-369 each participate in a glycyl lysine isopeptide (Lys-Gly) (interchain with G-Cter in SUMO2) cross-link.

Belongs to the KRR1 family. Part of the small subunit (SSU) processome, composed of more than 70 proteins and the RNA chaperone small nucleolar RNA (snoRNA) U3. In terms of assembly, (Microbial infection) Directly interacts with HIV-1 protein VPR. Also identified in a complex with NR3C1 and HIV-1 protein VPR.

The protein localises to the nucleus. Its subcellular location is the nucleolus. It localises to the cytoplasm. Its function is as follows. Part of the small subunit (SSU) processome, first precursor of the small eukaryotic ribosomal subunit. During the assembly of the SSU processome in the nucleolus, many ribosome biogenesis factors, an RNA chaperone and ribosomal proteins associate with the nascent pre-rRNA and work in concert to generate RNA folding, modifications, rearrangements and cleavage as well as targeted degradation of pre-ribosomal RNA by the RNA exosome. The polypeptide is KRR1 small subunit processome component homolog (Homo sapiens (Human)).